We begin with the raw amino-acid sequence, 179 residues long: Crossover junction endodeoxyribonuclease RuvC (179 aa).

Active-site residues include Asp14, Glu74, and Asp147. Residues Asp14, Glu74, and Asp147 each coordinate Mg(2+).

The protein belongs to the RuvC family. In terms of assembly, homodimer which binds Holliday junction (HJ) DNA. The HJ becomes 2-fold symmetrical on binding to RuvC with unstacked arms; it has a different conformation from HJ DNA in complex with RuvA. In the full resolvosome a probable DNA-RuvA(4)-RuvB(12)-RuvC(2) complex forms which resolves the HJ. The cofactor is Mg(2+).

The protein resides in the cytoplasm. The catalysed reaction is Endonucleolytic cleavage at a junction such as a reciprocal single-stranded crossover between two homologous DNA duplexes (Holliday junction).. Its function is as follows. The RuvA-RuvB-RuvC complex processes Holliday junction (HJ) DNA during genetic recombination and DNA repair. Endonuclease that resolves HJ intermediates. Cleaves cruciform DNA by making single-stranded nicks across the HJ at symmetrical positions within the homologous arms, yielding a 5'-phosphate and a 3'-hydroxyl group; requires a central core of homology in the junction. The consensus cleavage sequence is 5'-(A/T)TT(C/G)-3'. Cleavage occurs on the 3'-side of the TT dinucleotide at the point of strand exchange. HJ branch migration catalyzed by RuvA-RuvB allows RuvC to scan DNA until it finds its consensus sequence, where it cleaves and resolves the cruciform DNA. This chain is Crossover junction endodeoxyribonuclease RuvC, found in Rubrobacter xylanophilus (strain DSM 9941 / JCM 11954 / NBRC 16129 / PRD-1).